The sequence spans 103 residues: MYGDIFNATGGPEAAVGSALAPGATVKAEGALPLELATARGMRDGAATKPDLPTYLLLFFLLLLSVALVVLFIGCQLRHSAFAALPHDRSLRDARAPWKTRPV.

A helical membrane pass occupies residues 55 to 75 (YLLLFFLLLLSVALVVLFIGC).

It is found in the membrane. The chain is Small integral membrane protein 32 from Homo sapiens (Human).